A 411-amino-acid polypeptide reads, in one-letter code: LL-diaminopimelate aminotransferase (411 aa).

Substrate contacts are provided by tyrosine 15 and glycine 42. Residues tyrosine 72, 105-106 (SK), tyrosine 129, asparagine 186, tyrosine 217, and 245-247 (SFS) each bind pyridoxal 5'-phosphate. The substrate site is built by lysine 106, tyrosine 129, and asparagine 186. At lysine 248 the chain carries N6-(pyridoxal phosphate)lysine. Arginine 256 and asparagine 287 together coordinate pyridoxal 5'-phosphate. Substrate-binding residues include asparagine 287 and arginine 382.

This sequence belongs to the class-I pyridoxal-phosphate-dependent aminotransferase family. LL-diaminopimelate aminotransferase subfamily. In terms of assembly, homodimer. Pyridoxal 5'-phosphate is required as a cofactor.

It catalyses the reaction (2S,6S)-2,6-diaminopimelate + 2-oxoglutarate = (S)-2,3,4,5-tetrahydrodipicolinate + L-glutamate + H2O + H(+). It participates in amino-acid biosynthesis; L-lysine biosynthesis via DAP pathway; LL-2,6-diaminopimelate from (S)-tetrahydrodipicolinate (aminotransferase route): step 1/1. Functionally, involved in the synthesis of meso-diaminopimelate (m-DAP or DL-DAP), required for both lysine and peptidoglycan biosynthesis. Catalyzes the direct conversion of tetrahydrodipicolinate to LL-diaminopimelate. Is also able to use meso-diaminopimelate, lysine or ornithine as substrates. The polypeptide is LL-diaminopimelate aminotransferase (Protochlamydia amoebophila (strain UWE25)).